Here is a 306-residue protein sequence, read N- to C-terminus: UDP-3-O-acyl-N-acetylglucosamine deacetylase (306 aa).

Zn(2+) contacts are provided by His-79, His-238, and Asp-242. The Proton donor role is filled by His-265.

This sequence belongs to the LpxC family. Zn(2+) serves as cofactor.

It catalyses the reaction a UDP-3-O-[(3R)-3-hydroxyacyl]-N-acetyl-alpha-D-glucosamine + H2O = a UDP-3-O-[(3R)-3-hydroxyacyl]-alpha-D-glucosamine + acetate. Its pathway is glycolipid biosynthesis; lipid IV(A) biosynthesis; lipid IV(A) from (3R)-3-hydroxytetradecanoyl-[acyl-carrier-protein] and UDP-N-acetyl-alpha-D-glucosamine: step 2/6. Functionally, catalyzes the hydrolysis of UDP-3-O-myristoyl-N-acetylglucosamine to form UDP-3-O-myristoylglucosamine and acetate, the committed step in lipid A biosynthesis. This Shewanella sp. (strain ANA-3) protein is UDP-3-O-acyl-N-acetylglucosamine deacetylase.